An 876-amino-acid chain; its full sequence is Alanine--tRNA ligase (876 aa).

Zn(2+) is bound by residues H565, H569, C667, and H671.

The protein belongs to the class-II aminoacyl-tRNA synthetase family. It depends on Zn(2+) as a cofactor.

Its subcellular location is the cytoplasm. It catalyses the reaction tRNA(Ala) + L-alanine + ATP = L-alanyl-tRNA(Ala) + AMP + diphosphate. Catalyzes the attachment of alanine to tRNA(Ala) in a two-step reaction: alanine is first activated by ATP to form Ala-AMP and then transferred to the acceptor end of tRNA(Ala). Also edits incorrectly charged Ser-tRNA(Ala) and Gly-tRNA(Ala) via its editing domain. In Staphylococcus aureus (strain MSSA476), this protein is Alanine--tRNA ligase.